Here is a 245-residue protein sequence, read N- to C-terminus: Ribosomal RNA small subunit methyltransferase G (245 aa).

S-adenosyl-L-methionine contacts are provided by residues glycine 79, phenylalanine 84, alanine 130–glutamate 131, and arginine 150.

The protein belongs to the methyltransferase superfamily. RNA methyltransferase RsmG family.

It localises to the cytoplasm. Its function is as follows. Specifically methylates the N7 position of a guanine in 16S rRNA. The protein is Ribosomal RNA small subunit methyltransferase G of Limosilactobacillus fermentum (strain NBRC 3956 / LMG 18251) (Lactobacillus fermentum).